A 292-amino-acid chain; its full sequence is Sulfofructosephosphate aldolase (292 aa).

Lys193 acts as the Schiff-base intermediate with substrate in catalysis.

Belongs to the aldolase LacD family. Homotetramer.

It carries out the reaction 6-deoxy-6-sulfo-D-fructose 1-phosphate = (2S)-3-sulfolactaldehyde + dihydroxyacetone phosphate. Its function is as follows. Cleaves 6-deoxy-6-sulfo-D-fructose 1-phosphate (SFP) to form dihydroxyacetone phosphate (DHAP) and 3-sulfolactaldehyde (SLA). This is Sulfofructosephosphate aldolase (yihT) from Salmonella typhi.